The sequence spans 406 residues: Probable 2,3-bisphosphoglycerate-independent phosphoglycerate mutase (406 aa).

It belongs to the BPG-independent phosphoglycerate mutase family. A-PGAM subfamily.

It catalyses the reaction (2R)-2-phosphoglycerate = (2R)-3-phosphoglycerate. It functions in the pathway carbohydrate degradation; glycolysis; pyruvate from D-glyceraldehyde 3-phosphate: step 3/5. Functionally, catalyzes the interconversion of 2-phosphoglycerate and 3-phosphoglycerate. The chain is Probable 2,3-bisphosphoglycerate-independent phosphoglycerate mutase from Thermus thermophilus (strain ATCC 27634 / DSM 579 / HB8).